We begin with the raw amino-acid sequence, 310 residues long: HTH-type transcriptional activator TtdR (310 aa).

The 58-residue stretch at 6–63 folds into the HTH lysR-type domain; it reads PLAKDLQVLVEIVHSGSFSAAAATLGQTPAFVTKRIQILENTLATTLLNRSARGVALT. The H-T-H motif DNA-binding region spans 23-42; it reads FSAAAATLGQTPAFVTKRIQ.

The protein belongs to the LysR transcriptional regulatory family.

Functionally, positive regulator required for L-tartrate-dependent anaerobic growth on glycerol. Induces expression of the ttdA-ttdB-ygjE operon. In Escherichia coli O6:K15:H31 (strain 536 / UPEC), this protein is HTH-type transcriptional activator TtdR (ttdR).